Reading from the N-terminus, the 328-residue chain is Stress response kinase A (328 aa).

D201 (proton acceptor) is an active-site residue. Residues N206 and D217 each contribute to the Mg(2+) site. D217 is an active-site residue.

It belongs to the SrkA/RdoA protein kinase family. Monomer. The cofactor is Mg(2+).

Its subcellular location is the cytoplasm. It catalyses the reaction L-seryl-[protein] + ATP = O-phospho-L-seryl-[protein] + ADP + H(+). It carries out the reaction L-threonyl-[protein] + ATP = O-phospho-L-threonyl-[protein] + ADP + H(+). In terms of biological role, a protein kinase that phosphorylates Ser and Thr residues. Probably acts to suppress the effects of stress linked to accumulation of reactive oxygen species. Probably involved in the extracytoplasmic stress response. This is Stress response kinase A from Salmonella paratyphi A (strain ATCC 9150 / SARB42).